Here is a 306-residue protein sequence, read N- to C-terminus: Follistatin-related protein 1 (306 aa).

The signal sequence occupies residues 1–18 (MWKRWLALALVAVAWVRA). The region spanning 28-51 (ICANVFCGAGRECAVTEKGEPTCL) is the Follistatin-like domain. 5 disulfides stabilise this stretch: C29/C40, C34/C50, C52/C82, C56/C75, and C64/C96. The region spanning 46–98 (GEPTCLCIEQCKPHKRPVCGSNGKTYLNHCELHRDACLTGSKIQVDYDGHCKE) is the Kazal-like domain. N142 carries N-linked (GlcNAc...) asparagine glycosylation. The 35-residue stretch at 142-176 (NYSEILDKYFKNFDNGDSRLDSSEFLKFVEQNETA) folds into the EF-hand 1 domain. Residue S163 is modified to Phosphoserine. N-linked (GlcNAc...) asparagine glycosylation is found at N173 and N178. In terms of domain architecture, EF-hand 2 spans 191-226 (LRGLCVDALIELSDENADWKLSFQEFLKCLNPSFNP). The 55-residue stretch at 231–285 (CALEDETYADGAETEVDCNRCVCACGNWVCTAMTCDGKNQKGAQTQTEEEMTRYV) folds into the VWFC domain.

As to quaternary structure, homodimer. Interacts with SCN10A. Interacts with DIP2A; DIP2A may act as a cell surface receptor for FSTL1. Interacts with BMP4. Interacts with CD14; this interaction promotes TL4-mediated signaling cascade.

It is found in the secreted. Secreted glycoprotein that is involved in various physiological processes, such as angiogenesis, regulation of the immune response, cell proliferation and differentiation. Plays a role in the development of the central nervous system, skeletal system, lungs, and ureter. Promotes endothelial cell survival, migration and differentiation into network structures in an AKT-dependent manner. Also promotes survival of cardiac myocytes. Initiates various signaling cascades by activating different receptors on the cell surface such as DIP2A, TLR4 or BMP receptors. The protein is Follistatin-related protein 1 (FSTL1) of Pongo abelii (Sumatran orangutan).